The sequence spans 255 residues: Biotin carboxyl carrier protein of acetyl-CoA carboxylase 2, chloroplastic (255 aa).

The transit peptide at 1 to 87 (MASLSVPCVK…TNVPEPAELS (87 aa)) directs the protein to the chloroplast. Residues 148–193 (PPAQPVALPPSPTPTSTPATAKPTSAPSSSHPPLKSPMAGTFYRSP) form a disordered region. Positions 149–162 (PAQPVALPPSPTPT) are enriched in pro residues. A compositionally biased stretch (low complexity) spans 163 to 180 (STPATAKPTSAPSSSHPP). Residues 178–254 (HPPLKSPMAG…SVDTPLFVIA (77 aa)) form the Biotinyl-binding domain. Residue Lys220 is modified to N6-biotinyllysine.

Acetyl-CoA carboxylase is a heterohexamer composed of biotin carboxyl carrier protein, biotin carboxylase and 2 subunits each of ACCase subunit alpha and ACCase plastid-coded subunit beta (accD). In terms of tissue distribution, primarily expressed in 7 to 10 days after flowering seeds at levels approximately 2-fold less abundant than BCCP1.

It localises to the plastid. The protein localises to the chloroplast. It functions in the pathway lipid metabolism; fatty acid biosynthesis. Its function is as follows. This protein is a component of the acetyl coenzyme A carboxylase complex; first, biotin carboxylase catalyzes the carboxylation of the carrier protein and then the transcarboxylase transfers the carboxyl group to form malonyl-CoA. The sequence is that of Biotin carboxyl carrier protein of acetyl-CoA carboxylase 2, chloroplastic (BCCP2) from Arabidopsis thaliana (Mouse-ear cress).